Here is a 514-residue protein sequence, read N- to C-terminus: Variant surface glycoprotein ILTAT 1.24 (514 aa).

Positions 1–23 (MVYRNILQLSVLKVLLIVLIVEA) are cleaved as a signal peptide. Cystine bridges form between cysteine 37–cysteine 162 and cysteine 143–cysteine 204. An N-linked (GlcNAc...) asparagine glycan is attached at asparagine 443. The interval 451 to 476 (GVPVTQTQTAGADTTAEKCKGKGEKD) is disordered. Positions 455-464 (TQTQTAGADT) are enriched in low complexity. The segment covering 465-476 (TAEKCKGKGEKD) has biased composition (basic and acidic residues). Residue aspartate 491 is the site of GPI-anchor amidated aspartate attachment. A propeptide spans 492–514 (SSILANKQFALSVASAAFVALLF) (removed in mature form).

It is found in the cell membrane. Functionally, VSG forms a coat on the surface of the parasite. The trypanosome evades the immune response of the host by expressing a series of antigenically distinct VSGs from an estimated 1000 VSG genes. The chain is Variant surface glycoprotein ILTAT 1.24 from Trypanosoma brucei brucei.